A 218-amino-acid chain; its full sequence is N-(5'-phosphoribosyl)anthranilate isomerase (218 aa).

The protein belongs to the TrpF family.

The enzyme catalyses N-(5-phospho-beta-D-ribosyl)anthranilate = 1-(2-carboxyphenylamino)-1-deoxy-D-ribulose 5-phosphate. It functions in the pathway amino-acid biosynthesis; L-tryptophan biosynthesis; L-tryptophan from chorismate: step 3/5. The chain is N-(5'-phosphoribosyl)anthranilate isomerase from Rhodopseudomonas palustris (strain BisB18).